A 279-amino-acid polypeptide reads, in one-letter code: Tryptophan synthase alpha chain (279 aa).

Catalysis depends on proton acceptor residues Glu-50 and Asp-61.

This sequence belongs to the TrpA family. Tetramer of two alpha and two beta chains.

It catalyses the reaction (1S,2R)-1-C-(indol-3-yl)glycerol 3-phosphate + L-serine = D-glyceraldehyde 3-phosphate + L-tryptophan + H2O. It functions in the pathway amino-acid biosynthesis; L-tryptophan biosynthesis; L-tryptophan from chorismate: step 5/5. Functionally, the alpha subunit is responsible for the aldol cleavage of indoleglycerol phosphate to indole and glyceraldehyde 3-phosphate. The chain is Tryptophan synthase alpha chain from Brucella anthropi (strain ATCC 49188 / DSM 6882 / CCUG 24695 / JCM 21032 / LMG 3331 / NBRC 15819 / NCTC 12168 / Alc 37) (Ochrobactrum anthropi).